Reading from the N-terminus, the 609-residue chain is Dynamin-like protein 2 (609 aa).

Residues 1–16 (MQINLLNDFIKAYENT) form an inserts into assembly domain of DLP1, required for tetramerization region. The linker stretch occupies residues 17-25 (YSVSFDDSF). One can recognise a Dynamin-type G domain in the interval 63–310 (NIAIIGQFSS…FVGIFDRLLN (248 aa)). Residues 68 to 75 (GQFSSGKS) are G1 motif. Position 72–76 (72–76 (SGKSS)) interacts with GDP. The tract at residues 93–95 (PVT) is G2 motif. Positions 158–161 (DTPG) are G3 motif. Residues 216–219 (NQKD) are G4 motif.

The protein belongs to the TRAFAC class dynamin-like GTPase superfamily. Dynamin/Fzo/YdjA family. As to quaternary structure, forms a 2:2 heterotetramer with DLP1. DLP2 forms a central back-to-back dimer flanked on each side by a DLP1 subunit. In the crystal structures the 2 DLP1 subunits are in very different conformations.

The protein localises to the cytoplasm. The protein resides in the cytosol. It carries out the reaction GTP + H2O = GDP + phosphate + H(+). In terms of biological role, the heterotetrameric DLP1(2)-DLP2(2) complex tethers liposomes and may mediate their fusion. Initial binding is probably mediated by DLP1, while DLP2 couples DLP1 subunits and increases the effective reach of the complex up to 45 nm. The role of the nucleotide is unknown. This subunit alone very weakly binds to liposomes; GTP, GDP, GMPPCP and GMPPNP do not change heterotetramer binding. Tetramerization is required for GTPase activity, suggesting the GTPase domains (dynamin-type G) from DLP1 and DLP2 must dimerize to reconstitute the GTPase active site. This chain is Dynamin-like protein 2, found in Campylobacter jejuni subsp. jejuni serotype O:23/36 (strain 81-176).